Consider the following 861-residue polypeptide: DNA mismatch repair protein MutS (861 aa).

618–625 (GPNMGGKS) contributes to the ATP binding site.

This sequence belongs to the DNA mismatch repair MutS family.

In terms of biological role, this protein is involved in the repair of mismatches in DNA. It is possible that it carries out the mismatch recognition step. This protein has a weak ATPase activity. This Shewanella sp. (strain MR-7) protein is DNA mismatch repair protein MutS.